A 272-amino-acid chain; its full sequence is Eukaryotic translation initiation factor 3 subunit G (272 aa).

2 disordered regions span residues 1-28 (MPALDEIKSSWADEVELDSGSLPPPTEI) and 143-187 (AGKA…RGRD). The 79-residue stretch at 190-268 (TAIRISNLSE…LILNVEWSKP (79 aa)) folds into the RRM domain.

Belongs to the eIF-3 subunit G family. In terms of assembly, component of the eukaryotic translation initiation factor 3 (eIF-3) complex.

The protein localises to the cytoplasm. Functionally, RNA-binding component of the eukaryotic translation initiation factor 3 (eIF-3) complex, which is involved in protein synthesis of a specialized repertoire of mRNAs and, together with other initiation factors, stimulates binding of mRNA and methionyl-tRNAi to the 40S ribosome. The eIF-3 complex specifically targets and initiates translation of a subset of mRNAs involved in cell proliferation. This subunit can bind 18S rRNA. The sequence is that of Eukaryotic translation initiation factor 3 subunit G from Culex quinquefasciatus (Southern house mosquito).